A 521-amino-acid polypeptide reads, in one-letter code: Bifunctional purine biosynthesis protein PurH (521 aa).

One can recognise an MGS-like domain in the interval 1-145; it reads MIKQALISVS…KNHRDVTVVV (145 aa).

Belongs to the PurH family.

It catalyses the reaction (6R)-10-formyltetrahydrofolate + 5-amino-1-(5-phospho-beta-D-ribosyl)imidazole-4-carboxamide = 5-formamido-1-(5-phospho-D-ribosyl)imidazole-4-carboxamide + (6S)-5,6,7,8-tetrahydrofolate. It carries out the reaction IMP + H2O = 5-formamido-1-(5-phospho-D-ribosyl)imidazole-4-carboxamide. It participates in purine metabolism; IMP biosynthesis via de novo pathway; 5-formamido-1-(5-phospho-D-ribosyl)imidazole-4-carboxamide from 5-amino-1-(5-phospho-D-ribosyl)imidazole-4-carboxamide (10-formyl THF route): step 1/1. It functions in the pathway purine metabolism; IMP biosynthesis via de novo pathway; IMP from 5-formamido-1-(5-phospho-D-ribosyl)imidazole-4-carboxamide: step 1/1. This Paraburkholderia phytofirmans (strain DSM 17436 / LMG 22146 / PsJN) (Burkholderia phytofirmans) protein is Bifunctional purine biosynthesis protein PurH.